Consider the following 1133-residue polypeptide: Roquin-1 (1133 aa).

Zn(2+)-binding residues include Cys14, Cys17, Cys33, His35, Cys38, Cys50, and Asp53. The RING-type; degenerate zinc finger occupies 14 to 54 (CPICTQTFDETIRKPISLGCGHTVCKMCLNKLHRKACPFDQ). The tract at residues 89 to 173 (GVEDTKHYEE…RTVTELILQH (85 aa)) is HEPN-N. The ROQ stretch occupies residues 174–326 (QNPQQLSSNL…MQSIIDKLQT (153 aa)). The segment at 327 to 396 (PASFAQSVQE…VVHGLVDYIQ (70 aa)) is HEPN-C. The C3H1-type zinc finger occupies 413 to 441 (KYKTYMCRDMKQRGGCPRGASCTFAHSQE). Ser462, Ser531, Ser535, and Ser863 each carry phosphoserine. Residues 505-542 (TQLIPRGTDPSYDSSLKPGKIDHLSSSAPGSPPDLLES) are disordered. 3 disordered regions span residues 1000-1019 (NTLA…WPGM), 1058-1078 (NTSK…PAED), and 1094-1133 (QENI…SSAP). The span at 1007–1016 (QPPPPPPPKW) shows a compositional bias: pro residues. The segment covering 1058–1070 (NTSKQAENGQPEP) has biased composition (polar residues). The segment covering 1096-1110 (NISLLSNKTSSLNLS) has biased composition (low complexity). A Phosphoserine modification is found at Ser1110. Over residues 1119-1133 (NNDSQRSGVTPSSAP) the composition is skewed to polar residues.

As to quaternary structure, able to homodimerize. Interacts with DDX6 and EDC4. Interacts with CCR4-NOT deadenylase complex. Interacts with RC3H1; the interaction is RNA independent. In terms of processing, proteolytically cleaved after Arg-510 and Arg-579 by MALT1 in activated CD4(+) T cells; cleavage at Arg-510 and Arg-579 is critical for promoting RC3H1 degradation in response to T-cell receptor (TCR) stimulation, and hence is necessary for prolonging the stability of a set of mRNAs controlling Th17 cell differentiation. Widely expressed. Expressed at higher level in cerebellum, spleen, ovary and liver.

The protein resides in the cytoplasm. The protein localises to the P-body. It localises to the cytoplasmic granule. The catalysed reaction is S-ubiquitinyl-[E2 ubiquitin-conjugating enzyme]-L-cysteine + [acceptor protein]-L-lysine = [E2 ubiquitin-conjugating enzyme]-L-cysteine + N(6)-ubiquitinyl-[acceptor protein]-L-lysine.. The protein operates within protein modification; protein ubiquitination. Its function is as follows. Post-transcriptional repressor of mRNAs containing a conserved stem loop motif, called constitutive decay element (CDE), which is often located in the 3'-UTR, as in HMGXB3, ICOS, IER3, NFKBID, NFKBIZ, PPP1R10, TNF, TNFRSF4 and in many more mRNAs. Cleaves translationally inactive mRNAs harboring a stem-loop (SL), often located in their 3'-UTRs, during the early phase of inflammation in a helicase UPF1-independent manner. Binds to CDE and promotes mRNA deadenylation and degradation. This process does not involve miRNAs. In follicular helper T (Tfh) cells, represses of ICOS and TNFRSF4 expression, thus preventing spontaneous Tfh cell differentiation, germinal center B-cell differentiation in the absence of immunization and autoimmunity. In resting or LPS-stimulated macrophages, controls inflammation by suppressing TNF expression. Also recognizes CDE in its own mRNA and in that of paralogous RC3H2, possibly leading to feedback loop regulation. Recognizes and binds mRNAs containing a hexaloop stem-loop motif, called alternative decay element (ADE). Together with ZC3H12A, destabilizes TNFRSF4/OX40 mRNA by binding to the conserved stem loop structure in its 3'UTR. Able to interact with double-stranded RNA (dsRNA). miRNA-binding protein that regulates microRNA homeostasis. Enhances DICER-mediated processing of pre-MIR146a but reduces mature MIR146a levels through an increase of 3' end uridylation. Both inhibits ICOS mRNA expression and they may act together to exert the suppression. Acts as a ubiquitin E3 ligase. Pairs with E2 enzymes UBE2A, UBE2B, UBE2D2, UBE2F, UBE2G1, UBE2G2 and UBE2L3 and produces polyubiquitin chains. Shows the strongest activity when paired with UBE2N:UBE2V1 or UBE2N:UBE2V2 E2 complexes and generate both short and long polyubiquitin chains. In Homo sapiens (Human), this protein is Roquin-1.